A 965-amino-acid polypeptide reads, in one-letter code: Collagen alpha-1(I) chain (965 aa).

A compositionally biased stretch (pro residues) spans 1-21 (SVPGPMGPSGPRGLPGPPGPG). The interval 1–965 (SVPGPMGPSG…PGPPGPPGPP (965 aa)) is disordered. 4-hydroxyproline occurs at positions 15, 18, 20, 29, 32, 35, 49, 64, 70, 79, and 85. The segment covering 52–66 (NGDDGEAGKPGRPGE) has biased composition (basic and acidic residues). Lys-88 carries the post-translational modification 5-hydroxylysine; alternate. A glycan (O-linked (Gal...) hydroxylysine; alternate) is linked at Lys-88. Ser-94 is subject to Phosphoserine. The span at 102 to 118 (DAGPAGPKGEPGSPGEN) shows a compositional bias: low complexity. Residues Pro-112, Pro-115, Pro-121, Pro-130, Pro-136, Pro-157, Pro-166, Pro-169, Pro-196, Pro-199, Pro-211, Pro-217, Pro-226, Pro-232, Pro-235, and Pro-250 each carry the 4-hydroxyproline modification. Residues 136-154 (PGASGPAGARGNDGATGAA) are compositionally biased toward low complexity. Over residues 156–168 (PPGPTGPAGPPGF) the composition is skewed to pro residues. Over residues 202–241 (AGAAGPAGNPGADGQPGAKGANGAPGIAGAPGFPGARGPS) the composition is skewed to low complexity. Residue Lys-253 is modified to 5-hydroxylysine. 4-hydroxyproline is present on residues Pro-259, Pro-262, Pro-273, Pro-282, Pro-297, Pro-303, Pro-312, and Pro-318. Gly residues predominate over residues 307 to 327 (GERGGPGSRGFPGADGAGPKG). Lys-326 carries the post-translational modification 5-hydroxylysine. Pro-335, Pro-344, Pro-350, Pro-356, Pro-365, Pro-368, Pro-377, Pro-386, Pro-392, Pro-404, Pro-413, Pro-422, Pro-425, Pro-443, Pro-460, Pro-466, Pro-472, Pro-480, Pro-492, Pro-501, Pro-509, Pro-515, and Pro-524 each carry 4-hydroxyproline. A compositionally biased stretch (low complexity) spans 359–385 (KGLTGSPGSPGPDGKTGPPGPAGQDGR). Low complexity predominate over residues 394–413 (ARGQAGVMGFPGPKGAAGEP). Low complexity predominate over residues 472–482 (PGEADLGAPGP). Residue Lys-536 is modified to 5-hydroxylysine. 3 positions are modified to 4-hydroxyproline: Pro-542, Pro-557, and Pro-563. The span at 569–583 (SGPSGPAGPTGARGA) shows a compositional bias: low complexity. A Phosphoserine modification is found at Ser-572. Pro-584, Pro-590, Pro-593, Pro-602, Pro-608, Pro-626, Pro-635, and Pro-644 each carry 4-hydroxyproline. Low complexity predominate over residues 596–623 (AGFAGPPGADGQPGAKGEPGDAGAKGDA). The segment covering 625 to 637 (PPGPAGPTGPPGP) has biased composition (pro residues). A 5-hydroxylysine modification is found at Lys-647. Residues 652 to 668 (SAGPPGATGFPGAAGRV) show a composition bias toward low complexity. 4-hydroxyproline is present on residues Pro-656 and Pro-662. Pro-670 bears the 3-hydroxyproline mark. Pro-671, Pro-680, Pro-683, Pro-704, Pro-713, Pro-721, Pro-730, Pro-748, Pro-757, Pro-760, Pro-766, Pro-771, Pro-777, Pro-783, Pro-791, and Pro-797 each carry 4-hydroxyproline. The span at 697-706 (ETGPAGRPGE) shows a compositional bias: low complexity. Residues 718–730 (KGSPGADGPAGAP) are compositionally biased toward low complexity. The span at 768 to 780 (KGPPGPMGPPGLA) shows a compositional bias: pro residues. Lys-806 is modified (5-hydroxylysine). The span at 815–830 (SGPPGAPGAPGAPGPV) shows a compositional bias: pro residues. Residues Pro-818, Pro-821, and Pro-824 each carry the 4-hydroxyproline modification. A compositionally biased stretch (low complexity) spans 851-865 (AGPAGARGPAGPQGP). Positions 866–880 (RGDKGETGEQGDRGI) are enriched in basic and acidic residues. Lys-869 carries the 5-hydroxylysine modification. A 5-hydroxylysine; alternate modification is found at Lys-881. O-linked (Gal...) hydroxylysine; alternate glycosylation occurs at Lys-881. 4 positions are modified to 4-hydroxyproline: Pro-896, Pro-899, Pro-917, and Pro-932. The span at 899–932 (PGEQGPSGASGPAGPRGPPGSAGSPGKDGLNGLP) shows a compositional bias: low complexity. Pro-937 carries the post-translational modification 3-hydroxyproline. Pro-938 bears the 4-hydroxyproline mark. The span at 950 to 965 (VGPPGPPGPPGPPGPP) shows a compositional bias: pro residues. The residue at position 952 (Pro-952) is a 3-hydroxyproline. A 4-hydroxyproline modification is found at Pro-953. Pro-955 bears the 3-hydroxyproline mark. Pro-956 is subject to 4-hydroxyproline. Pro-958 is subject to 3-hydroxyproline. A 4-hydroxyproline mark is found at Pro-959, Pro-962, and Pro-965.

Belongs to the fibrillar collagen family. Trimers of one alpha 2(I) and two alpha 1(I) chains. In terms of processing, contains mostly 4-hydroxyproline. Proline residues at the third position of the tripeptide repeating unit (G-X-Y) are hydroxylated in some or all of the chains. Contains 3-hydroxyproline at a few sites. This modification occurs on the first proline residue in the sequence motif Gly-Pro-Hyp, where Hyp is 4-hydroxyproline. Post-translationally, lysine residues at the third position of the tripeptide repeating unit (G-X-Y) are 5-hydroxylated in some or all of the chains. In terms of processing, O-glycosylated on hydroxylated lysine residues. The O-linked glycan consists of a Glc-Gal disaccharide. In terms of tissue distribution, expressed in bones.

The protein resides in the secreted. The protein localises to the extracellular space. It is found in the extracellular matrix. Functionally, type I collagen is a member of group I collagen (fibrillar forming collagen). This Scelidotherium sp. (strain SLP-2019) (South American ground sloth) protein is Collagen alpha-1(I) chain.